The following is a 738-amino-acid chain: AP-4 complex subunit beta-1 (738 aa).

A hinge region spans residues 534 to 600 (CSPKSDPSLG…NASFATSGHL (67 aa)). The segment at 601 to 738 (ISEENKEGAQ…VIGTVGDIKS (138 aa)) is ear; mediates interaction with TEPSIN.

Belongs to the adaptor complexes large subunit family. In terms of assembly, adaptor protein complex 4 (AP-4) is a heterotetramer composed of two large adaptins (epsilon-type subunit AP4E1 and beta-type subunit AP4B1), a medium adaptin (mu-type subunit AP4M1) and a small adaptin (sigma-type AP4S1). Interacts with TEPSIN; this interaction requires the presence of a functional AP-4 complex. Interacts with GRIA2; probably indirect it mediates the somatodendritic localization of GRIA2 in neurons.

It is found in the golgi apparatus. The protein localises to the trans-Golgi network membrane. Its function is as follows. Component of the adaptor protein complex 4 (AP-4). Adaptor protein complexes are vesicle coat components involved both in vesicle formation and cargo selection. They control the vesicular transport of proteins in different trafficking pathways. AP-4 forms a non clathrin-associated coat on vesicles departing the trans-Golgi network (TGN) and may be involved in the targeting of proteins from the trans-Golgi network (TGN) to the endosomal-lysosomal system. It is also involved in protein sorting to the basolateral membrane in epithelial cells and the proper asymmetric localization of somatodendritic proteins in neurons. AP-4 is involved in the recognition and binding of tyrosine-based sorting signals found in the cytoplasmic part of cargos, but may also recognize other types of sorting signal. The chain is AP-4 complex subunit beta-1 from Mus musculus (Mouse).